The chain runs to 524 residues: Cytochrome P450 monooxygenase drtD (524 aa).

A helical membrane pass occupies residues 2-22 (SDTYLVAASGLAVCFFVLYLL). Cys-418 is a heme binding site.

It belongs to the cytochrome P450 family. The cofactor is heme.

It localises to the membrane. It functions in the pathway secondary metabolite biosynthesis; terpenoid biosynthesis. In terms of biological role, cytochrome P450 monooxygenase; part of the gene cluster that mediates the biosynthesis of various drimane-type sesquiterpene esters, compounds that exhibit diverse biological activities and are widely present in eukaryotes. The pathway begins with the synthesis of the backbone drimenol by the terpene cyclase drtB using farnesyl pyrophosphate (FPP) as substrate. The cytochrome P450 monooxygenase drtD is then responsible for the hydroxylations at C-6, C-9 and C-12, as well as the oxidation of hydroxyl groups at C-6 and C-11 to a ketone and an aldehyde, respectively. Then, the biosynthesis can go in two directions, either the hydroxylated drimenol is further hydroxylated at C-2 and C-3 by an enzyme(s) not associated with the drt cluster, or the FAD-binding oxidoreductase drtC further oxidizes C-11 or C-12 to form the butyrolactone ring. DrtB, drtD and drtC are solely responsible for the formation of the different drimane structures observed during drimane sesquiterpenes biosynthesis. The polyketide synthase drtA synthesizes different lengths (C6 and C8) of PKS chains, which are then oxidized to varying degrees by the short-chain dehydrogenase drtF. Finally, these PKS chains are transferred onto drimane sesquiterpenes by the acyltransferase drtE, forming the sesquiterpene esters. In addition to the different fatty acyl-CoA chains produced by drtA, drtE is also able to use cinnamoyl-CoA as a substrate. The sequence is that of Cytochrome P450 monooxygenase drtD from Aspergillus calidoustus.